The chain runs to 815 residues: Probable oligoxyloglucan-reducing end-specific xyloglucanase (815 aa).

The first 19 residues, 1 to 19 (MKFWLQQLGLAVLCASSAA), serve as a signal peptide directing secretion. Catalysis depends on D58, which acts as the Nucleophile. N113 is a glycosylation site (N-linked (GlcNAc...) asparagine). The stretch at 118–128 (FVSNDRGATFT) is one BNR 1 repeat. N180 is a glycosylation site (N-linked (GlcNAc...) asparagine). The BNR 2 repeat unit spans residues 218 to 228 (YYTTDGGKNWE). N-linked (GlcNAc...) asparagine glycans are attached at residues N246, N290, and N304. Residues 351–361 (YLSRDGGKTWK) form a BNR 3 repeat. N387 is a glycosylation site (N-linked (GlcNAc...) asparagine). D489 functions as the Proton donor in the catalytic mechanism. The stretch at 545 to 555 (YSTDGGSEWTK) is one BNR 4 repeat. N-linked (GlcNAc...) asparagine glycans are attached at residues N564 and N603. One copy of the BNR 5 repeat lies at 649–658 (YVSTDGGLSY). N-linked (GlcNAc...) asparagine glycosylation is present at N662. BNR repeat units follow at residues 696–706 (YHTTDFGKRWK) and 749–759 (YRSDDNGSTWD). The N-linked (GlcNAc...) asparagine glycan is linked to N754.

Belongs to the glycosyl hydrolase 74 family.

The protein localises to the secreted. The enzyme catalyses Hydrolysis of cellobiose from the reducing end of xyloglucans consisting of a beta-(1-&gt;4)-linked glucan carrying alpha-D-xylosyl groups on O-6 of the glucose residues. To be a substrate, the first residue must be unsubstituted, the second residue may bear a xylosyl group, whether further glycosylated or not, and the third residue, which becomes the new terminus by the action of the enzyme, is preferably xylosylated, but this xylose residue must not be further substituted.. In terms of biological role, oligoxyloglucan-reducing end-specific xyloglucanase involved in degradation of xyloglucans. Releases the first two glycosyl segments from oligoxyloglucans. Active against cotton xyloglucan, tamarind xyloglucan and tamarind xyloglucan oligomers. The protein is Probable oligoxyloglucan-reducing end-specific xyloglucanase (xgcA) of Neosartorya fischeri (strain ATCC 1020 / DSM 3700 / CBS 544.65 / FGSC A1164 / JCM 1740 / NRRL 181 / WB 181) (Aspergillus fischerianus).